The following is a 154-amino-acid chain: Ribonuclease H (154 aa).

One can recognise an RNase H type-1 domain in the interval 1–142 (MRKQVEIFTD…CDELARAAAS (142 aa)). Positions 10, 48, 70, and 134 each coordinate Mg(2+).

This sequence belongs to the RNase H family. In terms of assembly, monomer. Requires Mg(2+) as cofactor.

The protein resides in the cytoplasm. The enzyme catalyses Endonucleolytic cleavage to 5'-phosphomonoester.. In terms of biological role, endonuclease that specifically degrades the RNA of RNA-DNA hybrids. In Pectobacterium atrosepticum (strain SCRI 1043 / ATCC BAA-672) (Erwinia carotovora subsp. atroseptica), this protein is Ribonuclease H.